We begin with the raw amino-acid sequence, 836 residues long: TATA box-binding protein-associated factor RNA polymerase I subunit C (836 aa).

Disordered regions lie at residues 662–683 and 703–836; these read GDLSTLPRAEPPPAPQCSQQDE and HRGE…RMGF. Over residues 738–754 the composition is skewed to polar residues; that stretch reads DASSAPRSQDLSTSEAR. Positions 780–796 are enriched in basic and acidic residues; the sequence is RQTLRDHTDKLPLKRDT. Thr802 carries the post-translational modification Phosphothreonine. Residues 803-828 show a composition bias toward polar residues; that stretch reads PPSQASSLQTMSFRQQTPVHSGSQPP.

As to quaternary structure, component of the transcription factor SL1/TIF-IB complex, composed of TBP and at least TAF1A, TAF1B, TAF1C and TAF1D. In the complex interacts directly with TBP, TAF1A and TAF1B. Interaction of the SL1/TIF-IB subunits with TBP excludes interaction of TBP with the transcription factor IID (TFIID) subunits. Interacts with MYC and RRN3. Interacts with p53/TP53; the interaction prevents the association of SL1/TIF-IB with UBTF and represses RNA polymerase I transcription. Part of Pol I pre-initiation complex (PIC), in which Pol I core assembles with RRN3 and promoter-bound UTBF and SL1/TIF-IB complex.

It localises to the nucleus. The protein resides in the nucleolus. Its function is as follows. Component of the transcription factor SL1/TIF-IB complex, which is involved in the assembly of the PIC (pre-initiation complex) during RNA polymerase I-dependent transcription. The rate of PIC formation probably is primarily dependent on the rate of association of SL1/TIF-IB with the rDNA promoter. SL1/TIF-IB is involved in stabilization of nucleolar transcription factor 1/UBTF on rDNA. Formation of SL1/TIF-IB excludes the association of TBP with TFIID subunits. Recruits RNA polymerase I to the rRNA gene promoter via interaction with RRN3. The polypeptide is TATA box-binding protein-associated factor RNA polymerase I subunit C (Taf1c) (Mus musculus (Mouse)).